We begin with the raw amino-acid sequence, 81 residues long: Large ribosomal subunit protein bL27 (81 aa).

The tract at residues 1–22 (MAHKTGQSSSSNGRESKSKRLG) is disordered.

The protein belongs to the bacterial ribosomal protein bL27 family.

This chain is Large ribosomal subunit protein bL27, found in Opitutus terrae (strain DSM 11246 / JCM 15787 / PB90-1).